The primary structure comprises 152 residues: Protein Smg homolog (152 aa).

This sequence belongs to the Smg family.

In Bordetella avium (strain 197N), this protein is Protein Smg homolog.